Reading from the N-terminus, the 562-residue chain is uncharacterized protein (562 aa).

This is an uncharacterized protein from Saccharolobus islandicus (Sulfolobus islandicus).